Consider the following 193-residue polypeptide: GTP cyclohydrolase 1 (193 aa).

Positions 73, 76, and 144 each coordinate Zn(2+).

It belongs to the GTP cyclohydrolase I family. In terms of assembly, homomer.

It carries out the reaction GTP + H2O = 7,8-dihydroneopterin 3'-triphosphate + formate + H(+). Its pathway is cofactor biosynthesis; 7,8-dihydroneopterin triphosphate biosynthesis; 7,8-dihydroneopterin triphosphate from GTP: step 1/1. The chain is GTP cyclohydrolase 1 from Hyperthermus butylicus (strain DSM 5456 / JCM 9403 / PLM1-5).